We begin with the raw amino-acid sequence, 383 residues long: MAKHLFTSESVSEGHPDKIADQISDAVLDAILEQDPKARVACETYVKTGMVLVGGEVTTSAWVDIEEITRKTVREIGYTHSDMGFDADSCAVLNAIGKQSPDINQGVDRADPAEQGAGDQGLMFGYANNETDVLMPAPITYAHALVKRQSEVRKDGTLPWLRPDAKSQVTFAYEDGKIVGIDAIVLSTQHREDVTQADLIEGVMETIIKPVLPAQWLNKDTKYFINPTGRFVIGGPVGDCGLTGRKIIVDTYGGMARHGGGAFSGKDPSKVDRSAAYAARYVAKNIVAAGLADRCEIQVSYAIGVAEPTSISIETFGTGKVSEEVLIKLVRQHFELRPYGLTAMLDLARPIYQQTAAYGHFGREGFPWEATDKAEMLRADAGL.

Histidine 15 provides a ligand contact to ATP. Residue aspartate 17 participates in Mg(2+) binding. Position 43 (glutamate 43) interacts with K(+). 2 residues coordinate L-methionine: glutamate 56 and glutamine 99. The interval 99–109 (QSPDINQGVDR) is flexible loop. Residues 164-166 (DAK), 230-231 (RF), aspartate 239, 245-246 (RK), alanine 262, and lysine 266 each bind ATP. Residue aspartate 239 coordinates L-methionine. Lysine 270 serves as a coordination point for L-methionine.

Belongs to the AdoMet synthase family. As to quaternary structure, homotetramer; dimer of dimers. It depends on Mg(2+) as a cofactor. K(+) serves as cofactor.

It is found in the cytoplasm. The catalysed reaction is L-methionine + ATP + H2O = S-adenosyl-L-methionine + phosphate + diphosphate. It functions in the pathway amino-acid biosynthesis; S-adenosyl-L-methionine biosynthesis; S-adenosyl-L-methionine from L-methionine: step 1/1. Its function is as follows. Catalyzes the formation of S-adenosylmethionine (AdoMet) from methionine and ATP. The overall synthetic reaction is composed of two sequential steps, AdoMet formation and the subsequent tripolyphosphate hydrolysis which occurs prior to release of AdoMet from the enzyme. This Shewanella denitrificans (strain OS217 / ATCC BAA-1090 / DSM 15013) protein is S-adenosylmethionine synthase.